Reading from the N-terminus, the 257-residue chain is Imidazole glycerol phosphate synthase subunit HisF (257 aa).

Catalysis depends on residues aspartate 11 and aspartate 130.

It belongs to the HisA/HisF family. In terms of assembly, heterodimer of HisH and HisF.

Its subcellular location is the cytoplasm. The catalysed reaction is 5-[(5-phospho-1-deoxy-D-ribulos-1-ylimino)methylamino]-1-(5-phospho-beta-D-ribosyl)imidazole-4-carboxamide + L-glutamine = D-erythro-1-(imidazol-4-yl)glycerol 3-phosphate + 5-amino-1-(5-phospho-beta-D-ribosyl)imidazole-4-carboxamide + L-glutamate + H(+). It functions in the pathway amino-acid biosynthesis; L-histidine biosynthesis; L-histidine from 5-phospho-alpha-D-ribose 1-diphosphate: step 5/9. Its function is as follows. IGPS catalyzes the conversion of PRFAR and glutamine to IGP, AICAR and glutamate. The HisF subunit catalyzes the cyclization activity that produces IGP and AICAR from PRFAR using the ammonia provided by the HisH subunit. The sequence is that of Imidazole glycerol phosphate synthase subunit HisF from Francisella philomiragia subsp. philomiragia (strain ATCC 25017 / CCUG 19701 / FSC 153 / O#319-036).